The primary structure comprises 559 residues: Probable inorganic carbon transporter subunit DabB1 (559 aa).

A run of 13 helical transmembrane segments spans residues 4–24, 33–53, 76–96, 106–126, 173–193, 202–222, 240–260, 273–293, 310–330, 375–395, 408–428, 440–460, and 487–507; these read LQWL…LFAA, LSVA…VAYI, LSSI…VYSI, PRFF…VAAG, LVLA…PTLF, ATIM…LSAF, GPTP…GFII, VLHM…VLML, MGFM…FHLI, LPWL…LVIA, GAIV…FATH, MMIL…GHAF, and GLVF…YLAS.

The protein belongs to the inorganic carbon transporter (TC 9.A.2) DabB family. In terms of assembly, forms a complex with DabA1.

The protein resides in the cell inner membrane. Its function is as follows. Part of an energy-coupled inorganic carbon pump. The protein is Probable inorganic carbon transporter subunit DabB1 of Halothiobacillus neapolitanus (strain ATCC 23641 / c2) (Thiobacillus neapolitanus).